We begin with the raw amino-acid sequence, 1941 residues long: WD repeat-containing protein 81 (1941 aa).

The segment at 1–27 (MAQGSGGREGALRTPAGGWHSPPSPDM) is disordered. Positions 1–650 (MAQGSGGREG…TPCEASWTRD (650 aa)) are necessary and sufficient for the interaction with SQSTM1. The 278-residue stretch at 337–614 (GQPTGQEELR…IPKLLVQTIQ (278 aa)) folds into the BEACH domain. Disordered regions lie at residues 618–637 (GRED…GRPV), 694–718 (VASA…EEGR), 1022–1074 (SKDL…VSFH), 1097–1217 (PQEA…EGKE), 1523–1556 (PSSR…DGHS), and 1569–1602 (QIPN…DNAL). The segment covering 1137-1146 (LRSGDSSQDL) has biased composition (polar residues). The span at 1151 to 1174 (GSEEEEEEEDSCVVLEEEEGEQEE) shows a compositional bias: acidic residues. Positions 1586-1595 (SGVGGGGLGS) are enriched in gly residues. 7 WD repeats span residues 1639 to 1677 (IRLQ…LWPL), 1686 to 1724 (ETAP…VWDP), 1729 to 1769 (TLRT…FVDC), 1777 to 1815 (EFRL…LLDT), 1819 to 1856 (LVLR…VWKE), 1860 to 1896 (KPTH…VCSL), and 1902 to 1941 (QATT…RLLA).

Belongs to the WD repeat WDR81 family. In terms of assembly, interacts with WDR91; involved in early to late endosome cargo transport. Interacts with BECN1; negatively regulates the PI3 kinase/PI3K activity associated with endosomal membranes. Interacts with SQSTM1; the interaction is direct and regulates the interaction of SQSTM1 with ubiquitinated proteins. Interacts with MAP1LC3C; recruits MAP1LC3C to ubiquitinated protein aggregates in the aggrephagy process. As to expression, widely expressed. In the brain, highest levels in cerebellum and corpus callosum.

It is found in the early endosome membrane. The protein resides in the late endosome membrane. It localises to the lysosome membrane. Its subcellular location is the cytoplasmic vesicle. The protein localises to the autophagosome membrane. It is found in the mitochondrion. The protein resides in the cytoplasm. It localises to the cytosol. Its function is as follows. Functions as a negative regulator of the PI3 kinase/PI3K activity associated with endosomal membranes via BECN1, a core subunit of the PI3K complex. By modifying the phosphatidylinositol 3-phosphate/PtdInsP3 content of endosomal membranes may regulate endosome fusion, recycling, sorting and early to late endosome transport. It is for instance, required for the delivery of cargos like BST2/tetherin from early to late endosome and thereby participates indirectly to their degradation by the lysosome. May also play a role in aggrephagy, the macroautophagic degradation of ubiquitinated protein aggregates. In this process, may regulate the interaction of SQSTM1 with ubiquitinated proteins and also recruit MAP1LC3C. May also be involved in maintenance of normal mitochondrial structure and organization. This Homo sapiens (Human) protein is WD repeat-containing protein 81.